We begin with the raw amino-acid sequence, 435 residues long: Serine/threonine-protein kinase ssn3 (435 aa).

The Protein kinase domain maps to 49-377 (YRIVGFISSG…AREALEHPYF (329 aa)). ATP is bound by residues 55–63 (ISSGTYGRV) and K79. D181 serves as the catalytic Proton acceptor. Over residues 398 to 407 (RRVTQDDNDI) the composition is skewed to basic and acidic residues. A disordered region spans residues 398–435 (RRVTQDDNDIRSGSLPGTKRSGLPDDSLMGRASKRIKE).

Belongs to the protein kinase superfamily. CMGC Ser/Thr protein kinase family. CDC2/CDKX subfamily. In terms of assembly, component of the srb8-11 complex, a regulatory module of the Mediator complex. Mg(2+) serves as cofactor.

The protein localises to the nucleus. The catalysed reaction is L-seryl-[protein] + ATP = O-phospho-L-seryl-[protein] + ADP + H(+). It catalyses the reaction L-threonyl-[protein] + ATP = O-phospho-L-threonyl-[protein] + ADP + H(+). It carries out the reaction [DNA-directed RNA polymerase] + ATP = phospho-[DNA-directed RNA polymerase] + ADP + H(+). Functionally, component of the srb8-11 complex. The srb8-11 complex is a regulatory module of the Mediator complex which is itself involved in regulation of basal and activated RNA polymerase II-dependent transcription. The srb8-11 complex may be involved in the transcriptional repression of a subset of genes regulated by Mediator. It may inhibit the association of the Mediator complex with RNA polymerase II to form the holoenzyme complex. The srb8-11 complex phosphorylates the C-terminal domain (CTD) of the largest subunit of RNA polymerase II. The polypeptide is Serine/threonine-protein kinase ssn3 (ssn3) (Aspergillus terreus (strain NIH 2624 / FGSC A1156)).